A 476-amino-acid chain; its full sequence is Aspartyl/glutamyl-tRNA(Asn/Gln) amidotransferase subunit B (476 aa).

Belongs to the GatB/GatE family. GatB subfamily. Heterotrimer of A, B and C subunits.

The catalysed reaction is L-glutamyl-tRNA(Gln) + L-glutamine + ATP + H2O = L-glutaminyl-tRNA(Gln) + L-glutamate + ADP + phosphate + H(+). It carries out the reaction L-aspartyl-tRNA(Asn) + L-glutamine + ATP + H2O = L-asparaginyl-tRNA(Asn) + L-glutamate + ADP + phosphate + 2 H(+). Allows the formation of correctly charged Asn-tRNA(Asn) or Gln-tRNA(Gln) through the transamidation of misacylated Asp-tRNA(Asn) or Glu-tRNA(Gln) in organisms which lack either or both of asparaginyl-tRNA or glutaminyl-tRNA synthetases. The reaction takes place in the presence of glutamine and ATP through an activated phospho-Asp-tRNA(Asn) or phospho-Glu-tRNA(Gln). In Bacillus pumilus (strain SAFR-032), this protein is Aspartyl/glutamyl-tRNA(Asn/Gln) amidotransferase subunit B.